The primary structure comprises 170 residues: Putative calmodulin-like protein 6 (170 aa).

4 EF-hand domains span residues 8–43 (QQISDFRDAFSLFDKNNDGCISREELATVLTRLGMA), 44–79 (PSQEDLQDMIVAVDEDGNGTIEFDEFLAIMKKKLYE), 84–119 (DDEEELRKAFRIFDKDDNGFISRNELSMVMASLGEE), and 120–155 (MTEDEIDDMMKAADSNNDGQVDYEEFKRVMMSTWNI). The Ca(2+) site is built by aspartate 21, asparagine 23, aspartate 25, cysteine 27, glutamate 32, aspartate 57, aspartate 59, asparagine 61, threonine 63, glutamate 68, aspartate 97, aspartate 99, asparagine 101, glutamate 108, aspartate 133, asparagine 135, aspartate 137, glutamine 139, and glutamate 144.

This sequence belongs to the calmodulin family.

Its function is as follows. Potential calcium sensor. In Oryza sativa subsp. japonica (Rice), this protein is Putative calmodulin-like protein 6 (CML6).